Here is a 1436-residue protein sequence, read N- to C-terminus: DNA-directed RNA polymerase subunit beta (1436 aa).

The protein belongs to the RNA polymerase beta chain family. The RNAP catalytic core consists of 2 alpha, 1 beta, 1 beta' and 1 omega subunit. When a sigma factor is associated with the core the holoenzyme is formed, which can initiate transcription.

The enzyme catalyses RNA(n) + a ribonucleoside 5'-triphosphate = RNA(n+1) + diphosphate. Functionally, DNA-dependent RNA polymerase catalyzes the transcription of DNA into RNA using the four ribonucleoside triphosphates as substrates. In Wolbachia pipientis, this protein is DNA-directed RNA polymerase subunit beta.